A 751-amino-acid polypeptide reads, in one-letter code: Kelch-like protein 1 (751 aa).

Low complexity-rich tracts occupy residues 25–36 (PSPASSSPAGGS) and 74–90 (SSSS…ASSS). 3 disordered regions span residues 25–54 (PSPA…GPSQ), 69–98 (FWKK…LNGT), and 157–184 (SSIQ…SDLD). Residues 170 to 184 (LTSTNHSLTPQSDLD) are compositionally biased toward polar residues. In terms of domain architecture, BTB spans 215-282 (CDVILIVGNR…AYTGCLELKE (68 aa)). Kelch repeat units follow at residues 463–509 (TLYA…VIDD), 510–556 (KLFV…VLEG), 558–603 (IYAV…ALNG), 604–650 (KLYS…TCDG), 652–703 (LYAV…LLGD), and 704–750 (RLYA…VIKQ).

As to expression, highly expressed in brain.

It is found in the cytoplasm. The protein localises to the cytoskeleton. In terms of biological role, may play a role in organizing the actin cytoskeleton of the brain cells. The polypeptide is Kelch-like protein 1 (Klhl1) (Mus musculus (Mouse)).